We begin with the raw amino-acid sequence, 493 residues long: Probable cytosol aminopeptidase (493 aa).

Lysine 256 and aspartate 261 together coordinate Mn(2+). Lysine 268 is an active-site residue. Mn(2+) is bound by residues aspartate 279, aspartate 338, and glutamate 340. The active site involves arginine 342.

Belongs to the peptidase M17 family. Requires Mn(2+) as cofactor.

Its subcellular location is the cytoplasm. The enzyme catalyses Release of an N-terminal amino acid, Xaa-|-Yaa-, in which Xaa is preferably Leu, but may be other amino acids including Pro although not Arg or Lys, and Yaa may be Pro. Amino acid amides and methyl esters are also readily hydrolyzed, but rates on arylamides are exceedingly low.. It carries out the reaction Release of an N-terminal amino acid, preferentially leucine, but not glutamic or aspartic acids.. Functionally, presumably involved in the processing and regular turnover of intracellular proteins. Catalyzes the removal of unsubstituted N-terminal amino acids from various peptides. In Phytoplasma australiense, this protein is Probable cytosol aminopeptidase.